Consider the following 429-residue polypeptide: Adenylosuccinate synthetase (429 aa).

GTP contacts are provided by residues 12-18 (GDEGKGK) and 40-42 (GHT). The active-site Proton acceptor is the D13. Positions 13 and 40 each coordinate Mg(2+). IMP is bound by residues 13–16 (DEGK), 38–41 (NAGH), T128, R142, Q223, T238, and R302. The Proton donor role is filled by H41. 298-304 (VNTGRPR) serves as a coordination point for substrate. GTP-binding positions include R304, 330 to 332 (KLD), and 412 to 414 (GVG).

It belongs to the adenylosuccinate synthetase family. As to quaternary structure, homodimer. Mg(2+) serves as cofactor.

The protein localises to the cytoplasm. It catalyses the reaction IMP + L-aspartate + GTP = N(6)-(1,2-dicarboxyethyl)-AMP + GDP + phosphate + 2 H(+). It functions in the pathway purine metabolism; AMP biosynthesis via de novo pathway; AMP from IMP: step 1/2. Plays an important role in the de novo pathway of purine nucleotide biosynthesis. Catalyzes the first committed step in the biosynthesis of AMP from IMP. The polypeptide is Adenylosuccinate synthetase (Micrococcus luteus (strain ATCC 4698 / DSM 20030 / JCM 1464 / CCM 169 / CCUG 5858 / IAM 1056 / NBRC 3333 / NCIMB 9278 / NCTC 2665 / VKM Ac-2230) (Micrococcus lysodeikticus)).